Here is a 426-residue protein sequence, read N- to C-terminus: Histidine--tRNA ligase (426 aa).

The protein belongs to the class-II aminoacyl-tRNA synthetase family. As to quaternary structure, homodimer.

It localises to the cytoplasm. The catalysed reaction is tRNA(His) + L-histidine + ATP = L-histidyl-tRNA(His) + AMP + diphosphate + H(+). The protein is Histidine--tRNA ligase of Hydrogenovibrio crunogenus (strain DSM 25203 / XCL-2) (Thiomicrospira crunogena).